The following is a 784-amino-acid chain: Copal-8-ol diphosphate hydratase TPSSA9, chloroplastic (784 aa).

Substrate is bound at residue arginine 240. Mg(2+) is bound by residues aspartate 372 and aspartate 374. A DXDD motif motif is present at residues 372–375 (DIDD). Arginine 459 is a binding site for substrate.

It belongs to the terpene synthase family.

Its subcellular location is the plastid. It localises to the chloroplast. It catalyses the reaction (2E,6E,10E)-geranylgeranyl diphosphate + H2O = 8-hydroxycopalyl diphosphate. It functions in the pathway secondary metabolite biosynthesis; terpenoid biosynthesis. Involved in the biosynthesis of labdane-type diterpenoid including sclareol, a diterpene-diol that is used as fragrance and flavoring, and has anticancer effects (able to kill leukemic and colon cancer cells by apoptosis). Sclareol can also be used as synthesis precursor of ambergris substitution fragance products such as ambrox. Terpene synthase that produces 8-hydroxycopalyl diphosphate from geranylgeranyl diphosphate (GGPP). In Salvia sclarea (Clary sage), this protein is Copal-8-ol diphosphate hydratase TPSSA9, chloroplastic.